The following is a 692-amino-acid chain: Protein artemis (692 aa).

Residue threonine 380 is modified to Phosphothreonine. Phosphoserine is present on serine 385. 2 disordered regions span residues 504–555 (LENF…DSQS) and 640–664 (STNA…LPKR). Positions 506–520 (NFPSSTVAGGSQSPK) are enriched in polar residues. Over residues 530–543 (THISSQNSSQSTHI) the composition is skewed to low complexity. 2 stretches are compositionally biased toward polar residues: residues 544–555 (TEQGSQGWDSQS) and 640–650 (STNADSQSSSD). The residue at position 645 (serine 645) is a Phosphoserine; by ATM.

This sequence belongs to the DNA repair metallo-beta-lactamase (DRMBL) family. Interacts with LIG4; the interaction is direct. Interacts with ATM. Interacts with BRCA1. Interacts with PRKDC. Interacts with TP53BP1. Also exhibits ATM- and phosphorylation-dependent interaction with the MRN complex, composed of MRE11, RAD50, and NBN. In terms of processing, phosphorylation on undefined residues by PRKDC may stimulate endonucleolytic activity on 5' and 3' hairpins and overhangs. PRKDC must remain present, even after phosphorylation, for efficient hairpin opening. Also phosphorylated by ATM in response to ionizing radiation (IR) and by ATR in response to ultraviolet (UV) radiation. In terms of tissue distribution, ubiquitously expressed, with highest levels in the kidney, lung, pancreas and placenta (at the mRNA level). Expression is not increased in thymus or bone marrow, sites of V(D)J recombination.

The protein localises to the nucleus. Nuclease involved in DNA non-homologous end joining (NHEJ); required for double-strand break repair and V(D)J recombination. Required for V(D)J recombination, the process by which exons encoding the antigen-binding domains of immunoglobulins and T-cell receptor proteins are assembled from individual V, (D), and J gene segments. V(D)J recombination is initiated by the lymphoid specific RAG endonuclease complex, which generates site specific DNA double strand breaks (DSBs). These DSBs present two types of DNA end structures: hairpin sealed coding ends and phosphorylated blunt signal ends. These ends are independently repaired by the non homologous end joining (NHEJ) pathway to form coding and signal joints respectively. This protein exhibits single-strand specific 5'-3' exonuclease activity in isolation and acquires endonucleolytic activity on 5' and 3' hairpins and overhangs when in a complex with PRKDC. The latter activity is required specifically for the resolution of closed hairpins prior to the formation of the coding joint. Also required for the repair of complex DSBs induced by ionizing radiation, which require substantial end-processing prior to religation by NHEJ. The sequence is that of Protein artemis from Homo sapiens (Human).